A 291-amino-acid chain; its full sequence is Probable ABC transporter permease protein PH1038 (291 aa).

The next 8 membrane-spanning stretches (helical) occupy residues 7-27 (PFFF…YPVF), 75-95 (IVWI…FALL), 106-126 (IIKS…GLII), 133-153 (GAGV…AITW), 160-180 (ALFS…MLMY), 208-228 (FVIW…TLLW), 232-252 (IFDI…MVLA), and 267-287 (YAAV…LWLI). One can recognise an ABC transmembrane type-1 domain in the interval 71–286 (LIHNIVWIAI…ALTFIPALWL (216 aa)).

It belongs to the binding-protein-dependent transport system permease family. MalFG subfamily.

The protein resides in the cell membrane. In terms of biological role, probably part of a binding-protein-dependent transport system PH1036/38/39. Probably responsible for the translocation of the substrate across the membrane. The polypeptide is Probable ABC transporter permease protein PH1038 (Pyrococcus horikoshii (strain ATCC 700860 / DSM 12428 / JCM 9974 / NBRC 100139 / OT-3)).